A 292-amino-acid polypeptide reads, in one-letter code: tRNA pseudouridine synthase B (292 aa).

Catalysis depends on D38, which acts as the Nucleophile.

It belongs to the pseudouridine synthase TruB family. Type 1 subfamily.

The enzyme catalyses uridine(55) in tRNA = pseudouridine(55) in tRNA. Functionally, responsible for synthesis of pseudouridine from uracil-55 in the psi GC loop of transfer RNAs. This Gloeobacter violaceus (strain ATCC 29082 / PCC 7421) protein is tRNA pseudouridine synthase B.